The sequence spans 720 residues: Fatty acid CoA ligase Acsl3 (720 aa).

Residues 21–41 form a helical; Signal-anchor for type III membrane protein membrane-spanning segment; that stretch reads ILLYFIHFIISLYTILTYIPF. The Cytoplasmic portion of the chain corresponds to 42 to 720; the sequence is YFLCESKQEK…ADIERMYGRK (679 aa). Ser683 bears the Phosphoserine mark.

The protein belongs to the ATP-dependent AMP-binding enzyme family. Mg(2+) serves as cofactor.

The protein resides in the mitochondrion outer membrane. It localises to the peroxisome membrane. The protein localises to the microsome membrane. It is found in the endoplasmic reticulum membrane. It carries out the reaction a long-chain fatty acid + ATP + CoA = a long-chain fatty acyl-CoA + AMP + diphosphate. It catalyses the reaction (E)-hexadec-2-enoate + ATP + CoA = (2E)-hexadecenoyl-CoA + AMP + diphosphate. The enzyme catalyses (5Z,8Z,11Z,14Z)-eicosatetraenoate + ATP + CoA = (5Z,8Z,11Z,14Z)-eicosatetraenoyl-CoA + AMP + diphosphate. The catalysed reaction is 15-hydroxy-(5Z,8Z,11Z,13E)-eicosatetraenoate + ATP + CoA = 15-hydroxy-(5Z,8Z,11Z,13E)-eicosatetraenoyl-CoA + AMP + diphosphate. It carries out the reaction 12-hydroxy-(5Z,8Z,10E,14Z)-eicosatetraenoate + ATP + CoA = 12-hydroxy-(5Z,8Z,10E,14Z)-eicosatetraenoyl-CoA + AMP + diphosphate. It catalyses the reaction 5-hydroxy-(6E,8Z,11Z,14Z)-eicosatetraenoate + ATP + CoA = 5-hydroxy-(6E,8Z,11Z,14Z)-eicosatetraenoyl-CoA + AMP + diphosphate. The enzyme catalyses 14,15-epoxy-(5Z,8Z,11Z)-eicosatrienoate + ATP + CoA = 14,15-epoxy-(5Z,8Z,11Z)-eicosatrienoyl-CoA + AMP + diphosphate. The catalysed reaction is 11,12-epoxy-(5Z,8Z,14Z)-eicosatrienoate + ATP + CoA = 11,12-epoxy-(5Z,8Z,14Z)-eicosatrienoyl-CoA + AMP + diphosphate. It carries out the reaction a medium-chain fatty acid + ATP + CoA = a medium-chain fatty acyl-CoA + AMP + diphosphate. It catalyses the reaction hexadecanoate + ATP + CoA = hexadecanoyl-CoA + AMP + diphosphate. The enzyme catalyses tetradecanoate + ATP + CoA = tetradecanoyl-CoA + AMP + diphosphate. The catalysed reaction is dodecanoate + ATP + CoA = dodecanoyl-CoA + AMP + diphosphate. It carries out the reaction octadecanoate + ATP + CoA = octadecanoyl-CoA + AMP + diphosphate. It catalyses the reaction eicosanoate + ATP + CoA = eicosanoyl-CoA + AMP + diphosphate. The enzyme catalyses (9Z)-octadecenoate + ATP + CoA = (9Z)-octadecenoyl-CoA + AMP + diphosphate. The catalysed reaction is (9Z)-hexadecenoate + ATP + CoA = (9Z)-hexadecenoyl-CoA + AMP + diphosphate. It carries out the reaction (9Z,12Z)-octadecadienoate + ATP + CoA = (9Z,12Z)-octadecadienoyl-CoA + AMP + diphosphate. It catalyses the reaction (9Z,12Z,15Z)-octadecatrienoate + ATP + CoA = (9Z,12Z,15Z)-octadecatrienoyl-CoA + AMP + diphosphate. The enzyme catalyses (4Z,7Z,10Z,13Z,16Z,19Z)-docosahexaenoate + ATP + CoA = (4Z,7Z,10Z,13Z,16Z,19Z)-docosahexaenoyl-CoA + AMP + diphosphate. The catalysed reaction is (5Z,8Z,11Z,14Z,17Z)-eicosapentaenoate + ATP + CoA = (5Z,8Z,11Z,14Z,17Z)-eicosapentaenoyl-CoA + AMP + diphosphate. It carries out the reaction a fatty acid + ATP + CoA = a fatty acyl-CoA + AMP + diphosphate. In terms of biological role, acyl-CoA synthetases (ACSL) activates long-chain fatty acids for both synthesis of cellular lipids, and degradation via beta-oxidation. ACSL3 is required for the incorporation of fatty acids into phosphatidylcholine, the major phospholipid located on the surface of VLDL (very low density lipoproteins). Has mainly an anabolic role in energy metabolism. Mediates hepatic lipogenesis. Preferentially uses myristate, laurate, arachidonate and eicosapentaenoate as substrates. Both isoforms exhibit the same level of activity. The polypeptide is Fatty acid CoA ligase Acsl3 (Mus musculus (Mouse)).